Reading from the N-terminus, the 455-residue chain is J protein JJJ2 (455 aa).

Positions 12 to 76 constitute a J domain; the sequence is TYYSILGVPT…QLRAEYDKKL (65 aa). The disordered stretch occupies residues 104 to 241; sequence RNSKPYEQQP…RKKSEKKATP (138 aa). Residues 133-144 show a composition bias toward low complexity; the sequence is NSNPHNENSSNN. The segment covering 156-168 has biased composition (basic and acidic residues); that stretch reads TLSKDSEDKHGTD.

The protein localises to the cytoplasm. It is found in the nucleus. The chain is J protein JJJ2 (JJJ2) from Candida glabrata (strain ATCC 2001 / BCRC 20586 / JCM 3761 / NBRC 0622 / NRRL Y-65 / CBS 138) (Yeast).